We begin with the raw amino-acid sequence, 139 residues long: D-ribose pyranase (139 aa).

The active-site Proton donor is the H20. Substrate contacts are provided by residues D28, H106, and 128-130 (YAN).

This sequence belongs to the RbsD / FucU family. RbsD subfamily. As to quaternary structure, homodecamer.

It localises to the cytoplasm. It catalyses the reaction beta-D-ribopyranose = beta-D-ribofuranose. It participates in carbohydrate metabolism; D-ribose degradation; D-ribose 5-phosphate from beta-D-ribopyranose: step 1/2. Its function is as follows. Catalyzes the interconversion of beta-pyran and beta-furan forms of D-ribose. This Escherichia coli (strain 55989 / EAEC) protein is D-ribose pyranase.